Consider the following 71-residue polypeptide: MNDLKLLRSKLSTETIEELYKNLNLLKKELFNLRFQQALGELKNTSRFSLVKKSIARIKTELTKRSNSEEY.

Belongs to the universal ribosomal protein uL29 family.

The protein is Large ribosomal subunit protein uL29 of Rickettsia typhi (strain ATCC VR-144 / Wilmington).